The chain runs to 1401 residues: Protein dispatched homolog 2 (1401 aa).

2 disordered regions span residues 1–91 (MDGD…LAPA) and 113–138 (DRAA…GTWK). Residues 170–190 (VAVLMLCLAVIFLCTLAGLLG) traverse the membrane as a helical segment. An N-linked (GlcNAc...) asparagine glycan is attached at N239. Residues 241-264 (SSSHNTLRPAPRGSAQESAVRPRR) are disordered. Residues N349 and N465 are each glycosylated (N-linked (GlcNAc...) asparagine). The SSD domain occupies 471–643 (GMDLGLKQEL…LVWLPASAVL (173 aa)). 11 helical membrane passes run 484–504 (FLVQ…FGMA), 510–530 (LFLT…AFFL), 542–562 (FVNL…TLIF), 589–609 (FGYL…ASYL), 617–637 (CLAL…LVWL), 704–724 (YIWI…AGVS), 964–984 (PAVV…LGTW), 990–1010 (LFSV…LVLL), 1019–1039 (ALFL…YCIS), 1064–1084 (AVGA…TVLL), and 1088–1108 (LGII…FFFQ). 3 disordered regions span residues 1169 to 1192 (ARRR…PSVL), 1229 to 1337 (PALQ…NGKR), and 1352 to 1401 (SLPA…GYSS). The span at 1175-1184 (SFDTSTATSK) shows a compositional bias: polar residues. Positions 1259–1270 (PLPASPEAPAHS) are enriched in low complexity. Residues 1284 to 1305 (SSASTLEGLSVSDETCLSTSEP) are compositionally biased toward polar residues. Over residues 1352 to 1362 (SLPASHHSSLS) the composition is skewed to low complexity. Position 1366 is an omega-N-methylarginine (R1366).

This sequence belongs to the dispatched family.

The protein localises to the membrane. This is Protein dispatched homolog 2 from Homo sapiens (Human).